The following is a 124-amino-acid chain: MASFHIIVSYVTVVLAIIIAITFAARRFWISRYRSIRYSPVENSFEADFNNGLNSSSFDIAQNILAQDTRAGLDEAATSQIRGLMKQLQCSFDQARLIYIRKVMSDNNVDSTGMPLDNKAVTKL.

The signal sequence occupies residues 1-24 (MASFHIIVSYVTVVLAIIIAITFA).

It belongs to the UPF0357 family.

This is UPF0357 protein C1687.07 from Schizosaccharomyces pombe (strain 972 / ATCC 24843) (Fission yeast).